A 1007-amino-acid polypeptide reads, in one-letter code: Protein vav-1 (1007 aa).

Residues 37–151 (CDLWIGCARW…TLSFLSHTKE (115 aa)) form the Calponin-homology (CH) domain. An AC region spans residues 151 to 239 (ESLSRGVDPF…ENDLQNTPTL (89 aa)). The segment at 153–176 (LSRGVDPFPDTDNNQEGTSNGSEF) is disordered. Polar residues predominate over residues 163–174 (TDNNQEGTSNGS). Phosphotyrosine is present on residues tyrosine 183, tyrosine 200, and tyrosine 217. A DH domain is found at 240-437 (KRNRCIRELY…EDVCNYINEE (198 aa)). Residues 470–598 (RVNLDGEVKM…WMTALLLSKS (129 aa)) enclose the PH domain. The segment at 610–664 (NHKVAFHSFRVDVKNPATCDVCDKLMKGLQYQGYKCESCNMSMHKECLGLKKCEA) adopts a Phorbol-ester/DAG-type zinc-finger fold. Positions 688-750 (HEGDIVVANS…HLDHVSQSRT (63 aa)) constitute an SH3 1 domain. Residues 778 to 817 (LPNKLLSDGSSRSLSGPHGSRSSRNSSSSTINGSMDSVPR) are disordered. Residues 782 to 814 (LLSDGSSRSLSGPHGSRSSRNSSSSTINGSMDS) are compositionally biased toward low complexity. In terms of domain architecture, SH2 spans 831–925 (WYMGEMERAK…ALDTCLKNPY (95 aa)). One can recognise an SH3 2 domain in the interval 926–991 (SQCKVFKAVH…PLSYVKPYDP (66 aa)).

Post-translationally, GEF activity is regulated by phosphorylation on tyrosine residues. As to expression, strong expression in the pharynx, proximal gonad, spermatheca, intestine and rectal epithelia.

Functionally, acts as a guanine nucleotide exchange factor (GEF) for Rho GTPase. Has a critical roles in the generation of rhythmic behaviors: feeding, defecation and ovulation by dynamically regulating the concentration of intracellular calcium. Plays a role in male tail tip morphogenesis. The protein is Protein vav-1 of Caenorhabditis elegans.